A 730-amino-acid chain; its full sequence is Translation initiation factor IF-2 (730 aa).

Residues 48-151 are disordered; sequence GNGNQKQGGS…NKAKPLPEKV (104 aa). Composition is skewed to basic and acidic residues over residues 61 to 77 and 89 to 104; these read EQQKKAGEKKPAQDHGQ and NQHDRSQGSDQQKGKA. The span at 110–123 shows a compositional bias: basic residues; sequence KPKHKGNKNKKQHQ. Residues 137 to 148 are compositionally biased toward basic and acidic residues; that stretch reads RQPEMNKAKPLP. Residues 231 to 400 form the tr-type G domain; it reads ERPPVVTIMG…LLVAEVEELK (170 aa). Positions 240–247 are G1; that stretch reads GHVDHGKT. Position 240-247 (240-247) interacts with GTP; sequence GHVDHGKT. A G2 region spans residues 265–269; that stretch reads GITQH. A G3 region spans residues 286–289; sequence DTPG. GTP is bound by residues 286-290 and 340-343; these read DTPGH and NKMD. Residues 340-343 form a G4 region; that stretch reads NKMD. The tract at residues 376–378 is G5; sequence SAL.

The protein belongs to the TRAFAC class translation factor GTPase superfamily. Classic translation factor GTPase family. IF-2 subfamily.

The protein localises to the cytoplasm. In terms of biological role, one of the essential components for the initiation of protein synthesis. Protects formylmethionyl-tRNA from spontaneous hydrolysis and promotes its binding to the 30S ribosomal subunits. Also involved in the hydrolysis of GTP during the formation of the 70S ribosomal complex. This Halalkalibacterium halodurans (strain ATCC BAA-125 / DSM 18197 / FERM 7344 / JCM 9153 / C-125) (Bacillus halodurans) protein is Translation initiation factor IF-2.